Here is a 118-residue protein sequence, read N- to C-terminus: Ribonuclease P protein component (118 aa).

Belongs to the RnpA family. As to quaternary structure, consists of a catalytic RNA component (M1 or rnpB) and a protein subunit.

It catalyses the reaction Endonucleolytic cleavage of RNA, removing 5'-extranucleotides from tRNA precursor.. Its function is as follows. RNaseP catalyzes the removal of the 5'-leader sequence from pre-tRNA to produce the mature 5'-terminus. It can also cleave other RNA substrates such as 4.5S RNA. The protein component plays an auxiliary but essential role in vivo by binding to the 5'-leader sequence and broadening the substrate specificity of the ribozyme. This Rickettsia rickettsii (strain Iowa) protein is Ribonuclease P protein component.